The sequence spans 594 residues: Transcriptional repressor p66-beta (594 aa).

Ser-17 is subject to Phosphoserine. Glycyl lysine isopeptide (Lys-Gly) (interchain with G-Cter in SUMO2) cross-links involve residues Lys-33 and Lys-66. A disordered region spans residues 62 to 143 (ELPTKQDGSG…ASSPRSSSRM (82 aa)). Residues 74–89 (GYEEKLNGNLRPHGDN) are compositionally biased toward basic and acidic residues. A Glycyl lysine isopeptide (Lys-Gly) (interchain with G-Cter in SUMO2) cross-link involves residue Lys-98. Residues 109 to 119 (SARRSEPDRGR) show a composition bias toward basic and acidic residues. Phosphothreonine is present on Thr-121. Phosphoserine is present on residues Ser-123, Ser-130, Ser-135, and Ser-136. The span at 130-140 (SDNEASSPRSS) shows a compositional bias: low complexity. Residues 141 to 195 (SRMEERLKAANLEMFKGKGMEERQQLIKQLRDELRLEEARLVLLKKLRQSQLQKE) are a coiled coil. Lys-148 participates in a covalent cross-link: Glycyl lysine isopeptide (Lys-Gly) (interchain with G-Cter in SUMO2). The CR1; interaction with MBD2 and MBD3 stretch occupies residues 166-191 (LIKQLRDELRLEEARLVLLKKLRQSQ). Lys-200 is covalently cross-linked (Glycyl lysine isopeptide (Lys-Gly) (interchain with G-Cter in SUMO2)). Position 209 is a phosphoserine (Ser-209). The tract at residues 214–237 (SPAHVGQQGLSKLPSRPGAQGIEP) is disordered. Lys-282 participates in a covalent cross-link: Glycyl lysine isopeptide (Lys-Gly) (interchain with G-Cter in SUMO2). Ser-334, Ser-339, and Ser-341 each carry phosphoserine. The CR2; histone tail-binding stretch occupies residues 341-481 (SAMSDAANSQ…QEQEIEQRLQ (141 aa)). Residues Lys-354, Lys-455, and Lys-468 each participate in a glycyl lysine isopeptide (Lys-Gly) (interchain with G-Cter in SUMO2) cross-link. The GATA-type zinc-finger motif lies at 415-468 (RVEPFVCAQCRTDFTPHWKQEKNGKILCEQCMTSNQKKALKAEHTNRLKNAFVK). The stretch at 450–483 (QKKALKAEHTNRLKNAFVKALQQEQEIEQRLQQQ) forms a coiled coil. Position 487 is a phosphoserine (Ser-487). Lys-499 participates in a covalent cross-link: Glycyl lysine isopeptide (Lys-Gly) (interchain with G-Cter in SUMO2).

Homooligomer. Component of the nucleosome remodeling and deacetylase (NuRD) repressor complex, composed of core proteins MTA1, MTA2, MTA3, RBBP4, RBBP7, HDAC1, HDAC2, MBD2, MBD3, and peripherally associated proteins CDK2AP1, CDK2AP2, GATAD2A, GATAD2B, CHD3, CHD4 and CHD5. The exact stoichiometry of the NuRD complex is unknown, and some subunits such as MBD2 and MBD3, GATAD2A and GATAD2B, and CHD3, CHD4 and CHD5 define mutually exclusive NuRD complexes. Interacts with MBD2; this is required for the enhancement of MBD2-mediated repression and for targeting to the chromatin. Interacts with MBD3. Component of the MeCP1 histone deacetylase complex. Interacts with histone tails, including that of histones H2A, H2B, H3 and H4. Interacts with ERCC6.

The protein resides in the nucleus speckle. The protein localises to the nucleus. Its subcellular location is the chromosome. Functionally, transcriptional repressor. Acts as a component of the histone deacetylase NuRD complex which participates in the remodeling of chromatin. Enhances MBD2-mediated repression. Efficient repression requires the presence of GATAD2A. Targets MBD3 to discrete loci in the nucleus. May play a role in synapse development. This chain is Transcriptional repressor p66-beta (Gatad2b), found in Mus musculus (Mouse).